Here is a 94-residue protein sequence, read N- to C-terminus: Putative testis-specific prion protein (94 aa).

Residues 1–18 (MQHSLVFFFAVILHLSHL) form the signal peptide. N-linked (GlcNAc...) asparagine glycosylation is present at Asn-44.

In terms of tissue distribution, specifically expressed in adult testis.

The protein resides in the secreted. This Homo sapiens (Human) protein is Putative testis-specific prion protein (PRNT).